Here is a 35-residue protein sequence, read N- to C-terminus: Photosystem II reaction center protein T (35 aa).

A helical transmembrane segment spans residues 3-23 (SVAYILILTLAIGVLFFAIAF).

This sequence belongs to the PsbT family. PSII is composed of 1 copy each of membrane proteins PsbA, PsbB, PsbC, PsbD, PsbE, PsbF, PsbH, PsbI, PsbJ, PsbK, PsbL, PsbM, PsbT, PsbX, PsbY, PsbZ, Psb30/Ycf12, peripheral proteins PsbO, CyanoQ (PsbQ), PsbU, PsbV and a large number of cofactors. It forms dimeric complexes.

The protein resides in the cellular thylakoid membrane. Found at the monomer-monomer interface of the photosystem II (PS II) dimer, plays a role in assembly and dimerization of PSII. PSII is a light-driven water plastoquinone oxidoreductase, using light energy to abstract electrons from H(2)O, generating a proton gradient subsequently used for ATP formation. The sequence is that of Photosystem II reaction center protein T from Nostoc sp. (strain PCC 7120 / SAG 25.82 / UTEX 2576).